Reading from the N-terminus, the 111-residue chain is UPF0060 membrane protein CPR_1507 (111 aa).

Transmembrane regions (helical) follow at residues 7–27 (IFYF…IWLW), 33–53 (SLIY…IPTL), 60–80 (FGRV…LCGW), and 85–105 (IIPD…VLII).

Belongs to the UPF0060 family.

The protein localises to the cell membrane. This Clostridium perfringens (strain SM101 / Type A) protein is UPF0060 membrane protein CPR_1507.